Consider the following 948-residue polypeptide: MSEYKDTLNLPETGFPMRGDLAKREPEMLKRWYQEDLYGEIRKAKKGKKSFVLHDGPPYANGDIHIGHALNKILKDIIIKSKTLSGFDAPYVPGWDCHGLPIELMVEKKVGKPGQKVTAAEFREKCREYAAGQVEGQKESFKRLGIMGEWDKPYRTMDFTTEANIIRALGQIADNGHLLKGFKPVHWCTDCGSALAEAEVEYKNKVSPSIDVRFKAADEAALLAKFSLNEGHQGQGDVSIVIWTTTPWTLPANRAVCLRDDLEYVLIQVEGDNPERIIVAAELAKDVMDRAGIEHFHNLGFAKGADLELTQFQHPFYDFTVPAILGDHVTTDSGTGVVHTAPGHGQEDFAVGQKYNLEVANPVGSNGVYLPDTELFAGQHVFKANDAVVETLKEKGALLHHHAYEHSYPHCWRHKTPIIFRATPQWFVSMDQAGLRAKALESIKGVQWMPEWGQSRIEGMIEGRPEWCISRQRTWGVPIALFVHKETAELHPNTSELIEKVAQVVEQKGIQAWWDIDAAELLGDDAAQYEKVLDTLDVWFDSGVTHYAVVDKREEFNGAEADMYLEGSDQHRGWFQSSLISSIAMKGKAPYKQVLTHGFVVDGHGRKMSKSIGNVVAPKDVTNKLGADILRLWVASTDYTGEVAVSDEILKRSADAYRRIRNTARFFLANLNGFNPETDIVPVEEMVALDRWAVGRALAAQNEIVKAYDEYNTHAVTQRLMHFCSIEMGSFYLDVIKDRQYTAKLGGHAQRSCQTALYYIVEALVRWMAPIMSFTADEIWNQMPASLPSGESRDKFVFTGEWFDGLFGLAEGEELNNAFWSEMQKVRGAVNKLLEAARSDKTIGGSLQAELTLFADDALAAKINKLEDELRFVLLTSAATVKPLSEKSDAAQATDIEGLFVAVRATEAEKCDRCWHHTPDVGTIEGHEKICGRCVSNVDGEGEARKFA.

The 'HIGH' region motif lies at 58 to 68 (PYANGDIHIGH). Residue E566 participates in L-isoleucyl-5'-AMP binding. The short motif at 607-611 (KMSKS) is the 'KMSKS' region element. Residue K610 coordinates ATP. Zn(2+) is bound by residues C911, C914, C931, and C934.

This sequence belongs to the class-I aminoacyl-tRNA synthetase family. IleS type 1 subfamily. In terms of assembly, monomer. Zn(2+) serves as cofactor.

The protein localises to the cytoplasm. It catalyses the reaction tRNA(Ile) + L-isoleucine + ATP = L-isoleucyl-tRNA(Ile) + AMP + diphosphate. Catalyzes the attachment of isoleucine to tRNA(Ile). As IleRS can inadvertently accommodate and process structurally similar amino acids such as valine, to avoid such errors it has two additional distinct tRNA(Ile)-dependent editing activities. One activity is designated as 'pretransfer' editing and involves the hydrolysis of activated Val-AMP. The other activity is designated 'posttransfer' editing and involves deacylation of mischarged Val-tRNA(Ile). The polypeptide is Isoleucine--tRNA ligase (Vibrio vulnificus (strain CMCP6)).